The following is a 375-amino-acid chain: MADPAQLTVTPSRHEKSLGLLTSKFVSLLQEAEDGVLDLKAAADTLAVRQKRRIYDITNVLEGIGLIEKKSKNSIQWKGVGPGCNTREIADKLIDLKAELADLEQREQELDQQRVWVQQSIKNVTDDVQNTGLAYLNHEDICRCFRGDTLLAIRAPSGTCLEVPVPENTNGQKKFQIHLKSTTGPIEVLLVNKDTSSSAPVVVPVPPPEDLIQAPPAVPSTPQRPALTPQNDIATSPAPTVPHSTISNAESQDCPTGQTFSMENTTSSRLPSIDTCPLQSSASLDNSNDSPDPSTSFQPIKSDLSDVLELPKDMISDFFDQTKECITSDLLEELMSSEVFAPLLRLSPPPGDHDYVYNLDESEGVCDLFDVPINL.

A DNA-binding region spans residues 12-81 (SRHEKSLGLL…KNSIQWKGVG (70 aa)). Residues 39–61 (LKAAADTLAVRQKRRIYDITNVL) form a leucine-zipper region. Residues 44 to 81 (DTLAVRQKRRIYDITNVLEGIGLIEKKSKNSIQWKGVG) carry the DEF box motif. A dimerization region spans residues 82 to 177 (PGCNTREIAD…NTNGQKKFQI (96 aa)). The tract at residues 197 to 300 (SSAPVVVPVP…PDPSTSFQPI (104 aa)) is disordered. Over residues 220–270 (STPQRPALTPQNDIATSPAPTVPHSTISNAESQDCPTGQTFSMENTTSSRL) the composition is skewed to polar residues. The segment covering 280–296 (SSASLDNSNDSPDPSTS) has biased composition (low complexity). The interval 299–375 (PIKSDLSDVL…CDLFDVPINL (77 aa)) is transactivation.

It belongs to the E2F/DP family. In terms of assembly, component of the drtf1/e2f transcription factor complex. Component of the EDM complex, at least composed of e2f4, e2f5, mcidas and tfdp1.

It localises to the nucleus. Transcription activator that binds DNA cooperatively with DP proteins through the E2 recognition site, 5'-TTTC[CG]CGC-3' found in the promoter region of a number of genes. Component of the EDM complex, a complex specifically required for multiciliate cell differentiation: the EDM complex binds and activate genes required for centriole biogenesis. Activates genes required for centriole assembly (plk4, cep152) and genes specifically required for motile cilia formation (foxj1). Also promotes the deuterosome pathway of centriole biogenesis by activating expression of deup1, but not its paralog cep63. The sequence is that of Transcription factor E2F4 from Xenopus laevis (African clawed frog).